Here is a 149-residue protein sequence, read N- to C-terminus: Nucleoside diphosphate kinase (149 aa).

ATP is bound by residues K9, F57, R85, T91, R102, and N112. The active-site Pros-phosphohistidine intermediate is the H115.

Belongs to the NDK family. Mg(2+) serves as cofactor.

The protein resides in the cytoplasm. The enzyme catalyses a 2'-deoxyribonucleoside 5'-diphosphate + ATP = a 2'-deoxyribonucleoside 5'-triphosphate + ADP. It carries out the reaction a ribonucleoside 5'-diphosphate + ATP = a ribonucleoside 5'-triphosphate + ADP. In terms of biological role, major role in the synthesis of nucleoside triphosphates other than ATP. The ATP gamma phosphate is transferred to the NDP beta phosphate via a ping-pong mechanism, using a phosphorylated active-site intermediate. The protein is Nucleoside diphosphate kinase of Methanosarcina mazei (strain ATCC BAA-159 / DSM 3647 / Goe1 / Go1 / JCM 11833 / OCM 88) (Methanosarcina frisia).